Consider the following 438-residue polypeptide: Indole diterpene prenyltransferase janD (438 aa).

80-81 serves as a coordination point for L-tryptophan; sequence FM. Residues arginine 102, lysine 190, arginine 264, lysine 266, tyrosine 268, tyrosine 350, tyrosine 414, and tyrosine 418 each coordinate substrate.

Belongs to the tryptophan dimethylallyltransferase family.

It participates in secondary metabolite biosynthesis. Its function is as follows. Indole diterpene prenyltransferase; part of the gene cluster that mediates the biosynthesis of the indole diterpenes janthitremanes such as shearinine K or shearinine A. The geranylgeranyl diphosphate (GGPP) synthase janG catalyzes the first step in janthitremane biosynthesis via conversion of farnesyl pyrophosphate and isopentyl pyrophosphate into geranylgeranyl pyrophosphate (GGPP). Condensation of indole-3-glycerol phosphate with GGPP by the prenyl transferase janC then forms 3-geranylgeranylindole (3-GGI). Epoxidation by the FAD-dependent monooxygenase janM leads to a epoxidized-GGI that is substrate of the terpene cyclase janB for cyclization to yield paspaline. Paspaline is subsequently converted to 13-desoxypaspaline by the cytochrome P450 monooxygenase janP, via beta-PC-M6 in a series of alpha-face oxidations. The cytochrome P450 monooxygenase janQ is proposed to carry out sequential beta-face oxidation steps at C-7 and C-13 of 13-desoxypaspaline to form paspalicine and paspalinine respectively. The indole diterpene prenyltransferase janD may then convert paspalinine into shearinine K which is substrate of janO and/or additional enzymes for oxidation and cyclization to generate shearinine A. This is Indole diterpene prenyltransferase janD from Penicillium janthinellum (Penicillium vitale).